Reading from the N-terminus, the 316-residue chain is Ribose-phosphate pyrophosphokinase (316 aa).

ATP-binding positions include 41–43 and 100–101; these read DGE and RQ. 2 residues coordinate Mg(2+): His-134 and Asp-174. Residue Lys-197 is part of the active site. D-ribose 5-phosphate contacts are provided by residues Arg-199, Asp-223, and 227–231; that span reads DTAGT.

It belongs to the ribose-phosphate pyrophosphokinase family. Class I subfamily. As to quaternary structure, homohexamer. Mg(2+) serves as cofactor.

Its subcellular location is the cytoplasm. It catalyses the reaction D-ribose 5-phosphate + ATP = 5-phospho-alpha-D-ribose 1-diphosphate + AMP + H(+). It functions in the pathway metabolic intermediate biosynthesis; 5-phospho-alpha-D-ribose 1-diphosphate biosynthesis; 5-phospho-alpha-D-ribose 1-diphosphate from D-ribose 5-phosphate (route I): step 1/1. Its function is as follows. Involved in the biosynthesis of the central metabolite phospho-alpha-D-ribosyl-1-pyrophosphate (PRPP) via the transfer of pyrophosphoryl group from ATP to 1-hydroxyl of ribose-5-phosphate (Rib-5-P). This Caldanaerobacter subterraneus subsp. tengcongensis (strain DSM 15242 / JCM 11007 / NBRC 100824 / MB4) (Thermoanaerobacter tengcongensis) protein is Ribose-phosphate pyrophosphokinase.